Reading from the N-terminus, the 226-residue chain is Transcriptional activator plp-1 (226 aa).

This sequence belongs to the PUR DNA-binding protein family.

The protein resides in the nucleus. Its subcellular location is the chromosome. Its function is as follows. Probable transcription activator. Binds telomeric DNA containing repeats of the sequence, 5'-TTAGGC-3'. Binds to end-1 promoter, activating end-1 expression, which is required for endoderm specification during embryonic development. The polypeptide is Transcriptional activator plp-1 (Caenorhabditis elegans).